The primary structure comprises 184 residues: Der GTPase-activating protein YihI (184 aa).

Disordered regions lie at residues M1–S106 and L159–L184. Over residues V8–R32 the composition is skewed to basic and acidic residues. A compositionally biased stretch (acidic residues) spans L159–E169.

It belongs to the YihI family. As to quaternary structure, interacts with Der.

Its function is as follows. A GTPase-activating protein (GAP) that modifies Der/EngA GTPase function. May play a role in ribosome biogenesis. In Pectobacterium atrosepticum (strain SCRI 1043 / ATCC BAA-672) (Erwinia carotovora subsp. atroseptica), this protein is Der GTPase-activating protein YihI.